Here is a 347-residue protein sequence, read N- to C-terminus: Phosphoribosylformylglycinamidine cyclo-ligase (347 aa).

It belongs to the AIR synthase family.

The protein resides in the cytoplasm. The catalysed reaction is 2-formamido-N(1)-(5-O-phospho-beta-D-ribosyl)acetamidine + ATP = 5-amino-1-(5-phospho-beta-D-ribosyl)imidazole + ADP + phosphate + H(+). It participates in purine metabolism; IMP biosynthesis via de novo pathway; 5-amino-1-(5-phospho-D-ribosyl)imidazole from N(2)-formyl-N(1)-(5-phospho-D-ribosyl)glycinamide: step 2/2. In Yersinia enterocolitica serotype O:8 / biotype 1B (strain NCTC 13174 / 8081), this protein is Phosphoribosylformylglycinamidine cyclo-ligase.